The chain runs to 401 residues: Elongation factor Tu (401 aa).

The 202-residue stretch at 10–211 (KPHLNVGTIG…ALDTFVPNPK (202 aa)) folds into the tr-type G domain. Residues 19–26 (GHVDHGKT) are G1. 19–26 (GHVDHGKT) contacts GTP. Residue threonine 26 coordinates Mg(2+). Residues 62-66 (GITIA) are G2. Residues 83–86 (DCPG) are G3. GTP is bound by residues 83 to 87 (DCPGH) and 138 to 141 (NKAD). Residues 138–141 (NKAD) form a G4 region. Positions 179–181 (SAV) are G5.

This sequence belongs to the TRAFAC class translation factor GTPase superfamily. Classic translation factor GTPase family. EF-Tu/EF-1A subfamily. As to quaternary structure, monomer.

It is found in the cytoplasm. It catalyses the reaction GTP + H2O = GDP + phosphate + H(+). Functionally, GTP hydrolase that promotes the GTP-dependent binding of aminoacyl-tRNA to the A-site of ribosomes during protein biosynthesis. This is Elongation factor Tu from Leptospira interrogans serogroup Icterohaemorrhagiae serovar copenhageni (strain Fiocruz L1-130).